The primary structure comprises 512 residues: tRNA-2-methylthio-N(6)-dimethylallyladenosine synthase (512 aa).

The segment at 1 to 22 (MVAHDAAAGVTGEGAGPPVRRA) is disordered. Positions 25 to 141 (RTYQVRTYGC…LPTLLERARH (117 aa)) constitute an MTTase N-terminal domain. Residues Cys34, Cys70, Cys104, Cys178, Cys182, and Cys185 each coordinate [4Fe-4S] cluster. The Radical SAM core domain maps to 164–400 (RESAYAAWVS…IALQEQISLE (237 aa)). Positions 403–471 (RALVGQAVEV…PHHLIADAGV (69 aa)) constitute a TRAM domain.

Belongs to the methylthiotransferase family. MiaB subfamily. As to quaternary structure, monomer. Requires [4Fe-4S] cluster as cofactor.

The protein localises to the cytoplasm. It carries out the reaction N(6)-dimethylallyladenosine(37) in tRNA + (sulfur carrier)-SH + AH2 + 2 S-adenosyl-L-methionine = 2-methylsulfanyl-N(6)-dimethylallyladenosine(37) in tRNA + (sulfur carrier)-H + 5'-deoxyadenosine + L-methionine + A + S-adenosyl-L-homocysteine + 2 H(+). In terms of biological role, catalyzes the methylthiolation of N6-(dimethylallyl)adenosine (i(6)A), leading to the formation of 2-methylthio-N6-(dimethylallyl)adenosine (ms(2)i(6)A) at position 37 in tRNAs that read codons beginning with uridine. In Mycobacterium bovis (strain ATCC BAA-935 / AF2122/97), this protein is tRNA-2-methylthio-N(6)-dimethylallyladenosine synthase.